The chain runs to 78 residues: MSRVCQVTGKRPAVGNNRSHAMNATKRRFLPNLHTHRFWVESEKRFVTLRLTAKGMRIIDKKGIDAVLADIRARGEKI.

The protein belongs to the bacterial ribosomal protein bL28 family.

The polypeptide is Large ribosomal subunit protein bL28 (Pasteurella multocida (strain Pm70)).